Here is a 62-residue protein sequence, read N- to C-terminus: MQKLFIVLLLFCILRLDAEVDGRRATFCKQPGCQEACKKENKNGRCVDKFDNNFSYNICRCY.

Positions 1-18 (MQKLFIVLLLFCILRLDA) are cleaved as a signal peptide. 3 disulfide bridges follow: Cys28/Cys46, Cys33/Cys59, and Cys37/Cys61.

The protein belongs to the short scorpion toxin superfamily. Potassium channel inhibitor family. Alpha-KTx 23 subfamily. In terms of tissue distribution, expressed by the venom gland.

The protein resides in the secreted. Functionally, may block potassium channels. The chain is Potassium channel toxin alpha-KTx Tx773 from Buthus israelis (Israeli scorpion).